Consider the following 448-residue polypeptide: UDP-glucose 6-dehydrogenase (448 aa).

Residues 2–19, Val11, Asp30, Lys35, Thr121, and Glu152 each bind NAD(+); that span reads NITFIGSGYVGLVSGIIM. Substrate contacts are provided by residues 148 to 152, Lys204, Asn208, 249 to 253, and Gly257; these read EFLRE and FLNAG. Catalysis depends on Cys260, which acts as the Nucleophile. Residue Lys263 participates in NAD(+) binding. Position 321 (Lys321) interacts with substrate. NAD(+) is bound at residue Arg328.

Belongs to the UDP-glucose/GDP-mannose dehydrogenase family.

It catalyses the reaction UDP-alpha-D-glucose + 2 NAD(+) + H2O = UDP-alpha-D-glucuronate + 2 NADH + 3 H(+). It functions in the pathway nucleotide-sugar biosynthesis; UDP-alpha-D-glucuronate biosynthesis; UDP-alpha-D-glucuronate from UDP-alpha-D-glucose: step 1/1. In Rickettsia felis (strain ATCC VR-1525 / URRWXCal2) (Rickettsia azadi), this protein is UDP-glucose 6-dehydrogenase (udg).